The following is a 669-amino-acid chain: MPRSRNPSQGMPRDSSDSCGLSPVETPKGKKRARSLDRQVPRKKDPESSNTRCPSSATCRRTASDGARSSESPSHFAEAQGATAAALPPGEGRGFLPSEQGPPEDTKKERLPREAQQSWLRLVLNILLMRIEEPREKASRASKGKGDLPEAAEEPALRKKSHEKRTSRKKHSHRKPIAEEPPGPQTAEAQGREDVPPSLAASSAPHEIALGLICRGGPDSDLPQALPTEGDHAETPDSFGQASGPPLEEDPRKPDQDDVIWQIVELLKKAGDQLEEEQVQIPQPEAVPPRKPTPLPRKKSQEKKSSLKRVLSLKKPASEEPKRVGTATTLGPETRPKRPSFLPLCVSSQRASTSSSLDLEAPEFQEVPSVDGGGSHPSELHTPAAIFQGPEEKPLLDRASESREFRRKILVLLQSAEDERGEQEAQAQEAEKAGENPTPAGKVKSQVKKSNLRRAFSLRKHSSKDSKKTEASGTPGSGSLEARPPKKHGFLPMCVSGHRASISSSPESLEFQKTEAAGGAPAGSPGAPFQARSHTPDEGPSPERAWESKEFMIQKLVASLQEVDRDLGRQIRKYPSFKRFFNEFSDASLRKLVATLERQKASLSEEGRSLANRPPPCAFGTLNKFAATRSCTICTLMQSRGEYKGHSYAHFLSRKAEQDITNLDSQSPD.

Disordered regions lie at residues 1 to 116, 131 to 259, 273 to 401, and 413 to 544; these read MPRS…REAQ, IEEP…QDDV, QLEE…RASE, and LQSA…SPER. Over residues 34–47 the composition is skewed to basic and acidic residues; the sequence is RSLDRQVPRKKDPE. Residues 48 to 73 are compositionally biased toward polar residues; sequence SSNTRCPSSATCRRTASDGARSSESP. Composition is skewed to basic and acidic residues over residues 104–113 and 131–148; these read EDTKKERLPR and IEEPREKASRASKGKGDL. Over residues 158 to 175 the composition is skewed to basic residues; sequence RKKSHEKRTSRKKHSHRK. Residues 285–295 show a composition bias toward pro residues; the sequence is EAVPPRKPTPL. Lys314 is covalently cross-linked (Glycyl lysine isopeptide (Lys-Gly) (interchain with G-Cter in SUMO2)). Polar residues predominate over residues 346-357; that stretch reads VSSQRASTSSSL. Residues 390–401 are compositionally biased toward basic and acidic residues; it reads PEEKPLLDRASE. Residues 445-462 show a composition bias toward basic residues; that stretch reads SQVKKSNLRRAFSLRKHS. A compositionally biased stretch (low complexity) spans 516 to 528; it reads AAGGAPAGSPGAP.

The protein is Protein BNIP5 (Bnip5) of Mus musculus (Mouse).